The sequence spans 376 residues: Putative F-box protein At2g33200 (376 aa).

In terms of domain architecture, F-box spans 6–53 (YDWSKLCHDILRLILESLHYKDYHRARTVCSNWYTASTTCKRPLYPWR).

The polypeptide is Putative F-box protein At2g33200 (Arabidopsis thaliana (Mouse-ear cress)).